Reading from the N-terminus, the 535-residue chain is CTP synthase (535 aa).

Positions 1–266 (MKTKFIFITG…DERVVEKLNI (266 aa)) are amidoligase domain. Serine 14 provides a ligand contact to CTP. Serine 14 lines the UTP pocket. Residues 15–20 (SIGKGL) and aspartate 72 contribute to the ATP site. Mg(2+)-binding residues include aspartate 72 and glutamate 140. CTP is bound by residues 147-149 (DIE), 187-192 (KTKPTQ), and lysine 223. UTP contacts are provided by residues 187-192 (KTKPTQ) and lysine 223. The 243-residue stretch at 292 to 534 (RIAIVGKYVN…VRAALIQRDA (243 aa)) folds into the Glutamine amidotransferase type-1 domain. Position 354 (glycine 354) interacts with L-glutamine. Cysteine 381 functions as the Nucleophile; for glutamine hydrolysis in the catalytic mechanism. Residues 382–385 (LGMQ), glutamate 405, and arginine 462 contribute to the L-glutamine site. Residues histidine 507 and glutamate 509 contribute to the active site.

The protein belongs to the CTP synthase family. Homotetramer.

The catalysed reaction is UTP + L-glutamine + ATP + H2O = CTP + L-glutamate + ADP + phosphate + 2 H(+). It catalyses the reaction L-glutamine + H2O = L-glutamate + NH4(+). It carries out the reaction UTP + NH4(+) + ATP = CTP + ADP + phosphate + 2 H(+). It participates in pyrimidine metabolism; CTP biosynthesis via de novo pathway; CTP from UDP: step 2/2. With respect to regulation, allosterically activated by GTP, when glutamine is the substrate; GTP has no effect on the reaction when ammonia is the substrate. The allosteric effector GTP functions by stabilizing the protein conformation that binds the tetrahedral intermediate(s) formed during glutamine hydrolysis. Inhibited by the product CTP, via allosteric rather than competitive inhibition. Its function is as follows. Catalyzes the ATP-dependent amination of UTP to CTP with either L-glutamine or ammonia as the source of nitrogen. Regulates intracellular CTP levels through interactions with the four ribonucleotide triphosphates. The polypeptide is CTP synthase (Pelobacter propionicus (strain DSM 2379 / NBRC 103807 / OttBd1)).